The chain runs to 126 residues: Fatty acid-binding protein, liver (126 aa).

N-acetylalanine is present on Ala2.

The protein belongs to the calycin superfamily. Fatty-acid binding protein (FABP) family.

Its subcellular location is the cytoplasm. In terms of biological role, binds free fatty acids and their coenzyme A derivatives, bilirubin, and some other small molecules in the cytoplasm. May be involved in intracellular lipid transport. This Schroederichthys bivius (Narrowmouthed catshark) protein is Fatty acid-binding protein, liver (fabp1).